Reading from the N-terminus, the 105-residue chain is Large ribosomal subunit protein bL21 (105 aa).

It belongs to the bacterial ribosomal protein bL21 family. Part of the 50S ribosomal subunit. Contacts protein L20.

Its function is as follows. This protein binds to 23S rRNA in the presence of protein L20. The polypeptide is Large ribosomal subunit protein bL21 (Thermotoga maritima (strain ATCC 43589 / DSM 3109 / JCM 10099 / NBRC 100826 / MSB8)).